The sequence spans 156 residues: Calcium-binding protein A (156 aa).

EF-hand domains are found at residues 4–39 (AITK…TGSK), 40–75 (DPLR…VAAK), 80–115 (AINN…NNPD), and 118–153 (APLM…YKSL). Residues aspartate 17, asparagine 19, aspartate 21, asparagine 23, glutamate 28, aspartate 53, aspartate 55, aspartate 57, glutamate 64, aspartate 93, aspartate 95, aspartate 97, arginine 99, glutamate 104, aspartate 131, aspartate 133, aspartate 135, and glutamate 142 each coordinate Ca(2+).

The protein is Calcium-binding protein A (cbpA) of Dictyostelium discoideum (Social amoeba).